A 353-amino-acid polypeptide reads, in one-letter code: Probable transport protein YPL264C (353 aa).

Residues 1–16 (MTLQRISKDYLKPNYG) lie on the Cytoplasmic side of the membrane. The chain crosses the membrane as a helical span at residues 17–37 (LILLIVSYFFNSSMVVSTKVL). An EamA 1 domain is found at 24–160 (YFFNSSMVVS…SFSGVVLIIR (137 aa)). Residues 38 to 51 (ENDPLETSQSRINP) lie on the Extracellular side of the membrane. The helical transmembrane segment at 52–69 (LQILLVRMSITYCCTLVY) threads the bilayer. The Cytoplasmic segment spans residues 70–94 (MHWNKQSVPDIPWGPAPCRKWLILR). A helical membrane pass occupies residues 95–115 (GIMGFFGVFGMYFSLMYLSIS). Residue aspartate 116 is a topological domain, extracellular. Residues 117–137 (AVLITFMSPTLTIFLSFLLLG) form a helical membrane-spanning segment. The Cytoplasmic portion of the chain corresponds to 138–144 (EPFSKLE). A helical membrane pass occupies residues 145–165 (ALGSLISFSGVVLIIRPTFLF). The Extracellular segment spans residues 166 to 188 (GEQTQGQQSPQDDIVETQNPKLR). The helical transmembrane segment at 189-209 (LIAIGVSLLGVCGLSSVYIII) threads the bilayer. The EamA 2 domain maps to 200 to 326 (CGLSSVYIII…IVSSTIWVIN (127 aa)). At 210-218 (RYIGNKAHA) the chain is on the cytoplasmic side. A helical transmembrane segment spans residues 219–239 (IMSVSYFSLVTTVVAALGVLL). Residues 240 to 254 (IPSMSLQLPHSWKQW) are Extracellular-facing. A helical transmembrane segment spans residues 255–275 (GLFLNLGISGFIHQILLTMGI). The Cytoplasmic segment spans residues 276-282 (QRERAGR). Residues 283–303 (GSLMTYTQVIYAVFWDVVLFH) traverse the membrane as a helical segment. Residue histidine 304 is a topological domain, extracellular. A helical transmembrane segment spans residues 305-325 (WPNIWTWCGMAVIVSSTIWVI). Residues 326 to 353 (NMRASKQNVVATAELLSTSDFELDDLED) lie on the Cytoplasmic side of the membrane.

The protein localises to the membrane. This chain is Probable transport protein YPL264C, found in Saccharomyces cerevisiae (strain ATCC 204508 / S288c) (Baker's yeast).